A 995-amino-acid chain; its full sequence is MNHSAPGNADKHGESLAARFAEAPHIAASTTDERRFESWLAELEPAQSARLEALLVQPFGRNILVGIAEFSPYLFDLVRADPLRLIRLLECDPDTHLAALIAEARGAVLAAPDEAEVMRLLRRMKAEAALLTALCDIGGVWPVMRVTSALTDVAVSSVQAALQYLLRQEAARGKLFPPNPEAPEEGCGLIVLAMGKMGAGELNYSSDIDLIVFFDPDATTLAPDIEPQPFFVRVTQGMARILQQRTYDGYVFRVDLRLRPDPSSTQVAISRDAALHYYEREGRTWERAAMIKARACAGDARAGEALLAEIAPFVWRKHLDFAALADVHDMKRQMQTYRGQSEVAVEGHNVKVGRGGIREIEFFAQTQQLIAGGRHPELRVRPTLAALDVLASSNWITLAARDELARAYEFLRRVEHRLQMVADEQTHALPDDREAVERFARFFGYPDREAFARDLLRQLEIVQGHYEKLFEGDDPTGTAKLPALDYSAGPDDPRLFQHLTTLGFKKPAAVAQTVRDWITGDYRVFRNEATRSAFIEFVPALIDGLALAEEPDRAVVAFDQFLGALQRGGRLITLLGQNRDLVALVALVLGAAPRLGEMLARQPQLMDGLIDPRFFGAMPDRRELSGRLAATVQDAASYEEFLDRLRLFGQESLFLIGTRILSGTVSAQQASTAFADVAEGVVHTVHDLVADRFAAQHGRIKGQETAIIAMGRLGSREMTASSDLDLILLYDFDSENPDSDGPKSLQGAHYFARFTQRLISAFTTRTNYGVLYEIDMRLRPSGRAGPVASSLASFADYQANEAWTWEHMALTRARVVSASAEFGERIAGVIRDVLTRRRDPATIANDVADMRRAIAQEKGETDYWDLKYAAGGMIDIDFIAQYLQLVHAHHKPDILDVSTLQVLDNAARLGVLPQSEAEILRAAARLYHDLTQILRLCVSDRFKPETAGTDLQRVMARAGDAPDFSSLEARVKETQSEVRRVFRALLEGTSPASAR.

An adenylyl removase region spans residues 1–474 (MNHSAPGNAD…HYEKLFEGDD (474 aa)). GlnE regions lie at residues 122 to 333 (RRMK…MKRQ) and 637 to 853 (SYEE…MRRA). Residues 479 to 995 (AKLPALDYSA…LEGTSPASAR (517 aa)) are adenylyl transferase.

It belongs to the GlnE family. Mg(2+) is required as a cofactor.

It catalyses the reaction [glutamine synthetase]-O(4)-(5'-adenylyl)-L-tyrosine + phosphate = [glutamine synthetase]-L-tyrosine + ADP. The enzyme catalyses [glutamine synthetase]-L-tyrosine + ATP = [glutamine synthetase]-O(4)-(5'-adenylyl)-L-tyrosine + diphosphate. Involved in the regulation of glutamine synthetase GlnA, a key enzyme in the process to assimilate ammonia. When cellular nitrogen levels are high, the C-terminal adenylyl transferase (AT) inactivates GlnA by covalent transfer of an adenylyl group from ATP to specific tyrosine residue of GlnA, thus reducing its activity. Conversely, when nitrogen levels are low, the N-terminal adenylyl removase (AR) activates GlnA by removing the adenylyl group by phosphorolysis, increasing its activity. The regulatory region of GlnE binds the signal transduction protein PII (GlnB) which indicates the nitrogen status of the cell. The polypeptide is Bifunctional glutamine synthetase adenylyltransferase/adenylyl-removing enzyme (Bradyrhizobium diazoefficiens (strain JCM 10833 / BCRC 13528 / IAM 13628 / NBRC 14792 / USDA 110)).